The chain runs to 542 residues: MFSLQKKALQHIYMTPENASQLTKDLLQHLGLYWNGPIIKMDTVVHLHNKIFSNRSVLKYALAKQANITIIKTLVLWVEPEYALAQALKHNRKDVLECIFSYHLTTPKYHHIMHLTSSQELFEFFHLFICKSKNYNARMECLLYAATLYNFPNILEKNREYIIRYSIGNSLFAIACKERHIHLIAWFVTAGVLDTYDDSMLFNTAFKLGDYSLLEVACDLPIIYPDYLIISMMQTAIQKNYFRFFKKLLTHFNIYRQIIITDAAYYNRRKILLLLLKQNIFNNFAILCALSAAIKGHASKKTLNLLISQLDSQMTVVDSVYYSIIKYNNIDCIPLLMQIKTFRMETLVSIAVHGNNINIIAACKAFLPKDTLYHLVLKMAIVSRNYKLFKLYTEKENPMYIFTTIKAIISNLVNYTVVQAVAIEYLRKFHQERQLPIVPLLMVLAEHNYITKFKKTCYAANMSDQKVKRALIKCLFIASQKNYCQIFKYCFGSLLKVLSKHERVKFFNSVVFAKKLASYYDHQNMIHLIDSLIERFRYLIKD.

Belongs to the asfivirus MGF 505 family.

Plays a role in virus cell tropism, and may be required for efficient virus replication in macrophages. In African swine fever virus (isolate Warthog/Namibia/Wart80/1980) (ASFV), this protein is Protein MGF 505-11L.